The primary structure comprises 662 residues: Probable dolichyl-phosphate-mannose--protein mannosyltransferase 7 (662 aa).

Over 1 to 26 (MKDLRLQGPYRKYIPYNIFQQCGIGH) the chain is Lumenal. Residues 27 to 47 (LKTLDYIFAFLIVITNFTLIW) traverse the membrane as a helical segment. The Cytoplasmic portion of the chain corresponds to 48-159 (KSHSSSFWNR…GTIISFDSLE (112 aa)). A helical transmembrane segment spans residues 160–180 (WCLFSVVIYSFISISIAKLGT). Topologically, residues 181–195 (TNWFANVITLSISLG) are lumenal. A helical membrane pass occupies residues 196–216 (LAISSKFIGIVTWAFVILSFV). Over 217-235 (RQFDRLISDVKVTTIQIIK) the chain is Cytoplasmic. A helical transmembrane segment spans residues 236 to 256 (FVILCLLFVLIIPGSIFIISY). Residues 257 to 482 (SNLLSNFKTD…MEYPVIPRTT (226 aa)) are Lumenal-facing. Residues 289 to 344 (PSRLYYGSTITLRHLDSMVGYLASHDISYPSDVDEQLVALSFEEFAADNEWLIEHP) enclose the MIR 1 domain. An N-linked (GlcNAc...) asparagine glycan is attached at asparagine 347. 2 consecutive MIR domains span residues 359–418 (LIPV…VLLI) and 432–488 (DKYI…IDSV). The helical transmembrane segment at 483 to 503 (FLIDSVQLPVDFQVPMIEYYI) threads the bilayer. The Cytoplasmic portion of the chain corresponds to 504–565 (GKISSSAEFN…KWPITLDTDS (62 aa)). Residues 566 to 586 (PVWFNFAWYGSLLSMIIFMCV) traverse the membrane as a helical segment. The Lumenal segment spans residues 587–617 (QCKRMISWNPWTTAEPSFSIKWEVYNEFGWE). Residues 618–638 (CIVGWFLHFYIFTMSPHFNLG) form a helical membrane-spanning segment. Residues 639 to 662 (KKLYFQSFFFSVLCLLESLDCLAK) lie on the Cytoplasmic side of the membrane.

Belongs to the glycosyltransferase 39 family.

It localises to the endoplasmic reticulum membrane. The enzyme catalyses a di-trans,poly-cis-dolichyl beta-D-mannosyl phosphate + L-seryl-[protein] = 3-O-(alpha-D-mannosyl)-L-seryl-[protein] + a di-trans,poly-cis-dolichyl phosphate + H(+). The catalysed reaction is a di-trans,poly-cis-dolichyl beta-D-mannosyl phosphate + L-threonyl-[protein] = 3-O-(alpha-D-mannosyl)-L-threonyl-[protein] + a di-trans,poly-cis-dolichyl phosphate + H(+). The protein operates within protein modification; protein glycosylation. Its function is as follows. Probable protein O-mannosyltransferase involved in O-glycosylation which is essential for cell wall rigidity. Transfers mannose from Dol-P-mannose to Ser or Thr residues on proteins. The chain is Probable dolichyl-phosphate-mannose--protein mannosyltransferase 7 from Saccharomyces cerevisiae (strain ATCC 204508 / S288c) (Baker's yeast).